We begin with the raw amino-acid sequence, 835 residues long: Ubiquitin carboxyl-terminal hydrolase 26 (835 aa).

A disordered region spans residues 102–128 (SQGSIRPARSDERCGEPSTSAQELNGS). Over residues 118–128 (PSTSAQELNGS) the composition is skewed to polar residues. The USP domain maps to 286-816 (QGLPNVGNTC…TGYVFFYMHN (531 aa)). Cys295 acts as the Nucleophile in catalysis. The disordered stretch occupies residues 597-747 (NRESEAQSGK…TRKVDPTKLN (151 aa)). Basic and acidic residues-rich tracts occupy residues 634-652 (LTKETEKLKKHEEEHRPSD) and 669-679 (KCNEGRSDKQI). Residues 683–708 (ALTQSRPKPISQEQTENLGKTTLSHT) show a composition bias toward polar residues. A compositionally biased stretch (low complexity) spans 709-725 (QDSSQSSQSSSDSSKSS). Residues 726–747 (RCSDDLDKKAKPTRKVDPTKLN) show a composition bias toward basic and acidic residues. Catalysis depends on His771, which acts as the Proton acceptor.

This sequence belongs to the peptidase C19 family. As to quaternary structure, interacts with RING1.

The protein localises to the nucleus. Its subcellular location is the cytoplasm. It localises to the cytoskeleton. It is found in the flagellum axoneme. It catalyses the reaction Thiol-dependent hydrolysis of ester, thioester, amide, peptide and isopeptide bonds formed by the C-terminal Gly of ubiquitin (a 76-residue protein attached to proteins as an intracellular targeting signal).. Deubiquitinase regulating several biological processes through the deubiquitination of components of these processes. Involved in somatic cell reprogramming through the 'Lys-48'-linked deubiquitination and stabilization of CBX4 and CBX6, two components of the polycomb-repressive complex 1 (PRC1). Also deubiquitinates and probably stabilizes the androgen receptor (AR), regulating the androgen receptor signaling pathway. May play a role in spermatogenesis. The sequence is that of Ubiquitin carboxyl-terminal hydrolase 26 from Mus musculus (Mouse).